The sequence spans 541 residues: Phosphoenolpyruvate carboxykinase (ATP) (541 aa).

Substrate-binding residues include R64, Y206, and K212. Residues K212, H231, and 247–255 (GLSGTGKTT) each bind ATP. K212 and H231 together coordinate Mn(2+). D268 is a Mn(2+) binding site. The ATP site is built by E296, R332, and T454. Substrate is bound at residue R332.

Belongs to the phosphoenolpyruvate carboxykinase (ATP) family. Monomer. Mn(2+) serves as cofactor.

The protein resides in the cytoplasm. It carries out the reaction oxaloacetate + ATP = phosphoenolpyruvate + ADP + CO2. Its pathway is carbohydrate biosynthesis; gluconeogenesis. Functionally, involved in the gluconeogenesis. Catalyzes the conversion of oxaloacetate (OAA) to phosphoenolpyruvate (PEP) through direct phosphoryl transfer between the nucleoside triphosphate and OAA. The polypeptide is Phosphoenolpyruvate carboxykinase (ATP) (Wigglesworthia glossinidia brevipalpis).